Reading from the N-terminus, the 228-residue chain is MNRASLEKNPHEVASMFDGVARRYDLTNTVLSLGQDRFWRRATREALQLSPADKVLDLAAGTAVSTVELASSGAWCVAADFSVGMLAAGASRRVPKVAGDATRLPFDDGVFDAVTISFGLRNVVDFSAGLREMARVTRPGGRLVVCEFSTPTNGLFSTVYKEYLMKALPAMATAVSSNPDAYVYLAESIRAWPDQRALARRIEAAGWSDVRWRNLTGGIVALHAATKP.

Residues T62, D80, 100 to 101, and S117 each bind S-adenosyl-L-methionine; that span reads DA.

This sequence belongs to the class I-like SAM-binding methyltransferase superfamily. MenG/UbiE family.

The catalysed reaction is a 2-demethylmenaquinol + S-adenosyl-L-methionine = a menaquinol + S-adenosyl-L-homocysteine + H(+). It functions in the pathway quinol/quinone metabolism; menaquinone biosynthesis; menaquinol from 1,4-dihydroxy-2-naphthoate: step 2/2. Its function is as follows. Methyltransferase required for the conversion of demethylmenaquinol (DMKH2) to menaquinol (MKH2). The sequence is that of Demethylmenaquinone methyltransferase from Mycolicibacterium gilvum (strain PYR-GCK) (Mycobacterium gilvum (strain PYR-GCK)).